The primary structure comprises 108 residues: Large ribosomal subunit protein P1 (108 aa).

The segment at 67-108 (PAAAPAEAGGEEKKEEEKKEEEEKEEEVSEEEALAGLSALFG) is disordered. Residues 84 to 99 (KKEEEEKEEEVSEEEA) are compositionally biased toward acidic residues.

The protein belongs to the eukaryotic ribosomal protein P1/P2 family. Part of the 50S ribosomal subunit. Homodimer, it forms part of the ribosomal stalk which helps the ribosome interact with GTP-bound translation factors. Forms a heptameric uL10/P0(P1)2(P1)2(P1)2 complex, where uL10/P0 forms an elongated spine to which the P1 dimers bind in a sequential fashion.

In terms of biological role, forms part of the ribosomal stalk, playing a central role in the interaction of the ribosome with GTP-bound translation factors. The stalk complex of P.horikoshii binds to E.coli large subunits and confers on them the ability to interact with eukaryotic elongation factors. Each succesive P1 dimer bound along the P0 spine increases the GTPase activity of elongation factors and increases translation by reconsituted ribosomes. The sequence is that of Large ribosomal subunit protein P1 from Pyrococcus horikoshii (strain ATCC 700860 / DSM 12428 / JCM 9974 / NBRC 100139 / OT-3).